The sequence spans 571 residues: Potassium-transporting ATPase potassium-binding subunit (571 aa).

Transmembrane regions (helical) follow at residues 5 to 25 (GWIQ…PLGS), 64 to 84 (LAYT…LYAI), 136 to 156 (GLTH…VALI), 179 to 199 (LYVL…QGIP), 254 to 274 (LSNL…TNVF), 285 to 305 (WAIL…TYWA), 330 to 350 (FGIA…CGAV), 357 to 376 (FTAL…EIII), 421 to 441 (MLGI…ATVV), 488 to 508 (LAIG…AIAG), and 527 to 547 (GGLF…LTFF).

It belongs to the KdpA family. As to quaternary structure, the system is composed of three essential subunits: KdpA, KdpB and KdpC.

The protein resides in the cell inner membrane. Functionally, part of the high-affinity ATP-driven potassium transport (or Kdp) system, which catalyzes the hydrolysis of ATP coupled with the electrogenic transport of potassium into the cytoplasm. This subunit binds the periplasmic potassium ions and delivers the ions to the membrane domain of KdpB through an intramembrane tunnel. In Methylobacterium radiotolerans (strain ATCC 27329 / DSM 1819 / JCM 2831 / NBRC 15690 / NCIMB 10815 / 0-1), this protein is Potassium-transporting ATPase potassium-binding subunit.